The following is a 314-amino-acid chain: Ribonuclease Z (314 aa).

Zn(2+) is bound by residues H61, H63, D65, H66, H137, D207, and H263. The Proton acceptor role is filled by D65.

This sequence belongs to the RNase Z family. Homodimer. Requires Zn(2+) as cofactor.

It catalyses the reaction Endonucleolytic cleavage of RNA, removing extra 3' nucleotides from tRNA precursor, generating 3' termini of tRNAs. A 3'-hydroxy group is left at the tRNA terminus and a 5'-phosphoryl group is left at the trailer molecule.. Functionally, zinc phosphodiesterase, which displays some tRNA 3'-processing endonuclease activity. Probably involved in tRNA maturation, by removing a 3'-trailer from precursor tRNA. This is Ribonuclease Z from Thermococcus gammatolerans (strain DSM 15229 / JCM 11827 / EJ3).